Reading from the N-terminus, the 281-residue chain is Pantothenate synthetase (281 aa).

Residue 31 to 38 (MGNLHAGH) coordinates ATP. Catalysis depends on His38, which acts as the Proton donor. Position 62 (Gln62) interacts with (R)-pantoate. Gln62 contacts beta-alanine. 150-153 (GKKD) contributes to the ATP binding site. Gln156 lines the (R)-pantoate pocket. Residues Val179 and 187 to 190 (MSSR) each bind ATP.

Belongs to the pantothenate synthetase family. Homodimer.

The protein localises to the cytoplasm. The catalysed reaction is (R)-pantoate + beta-alanine + ATP = (R)-pantothenate + AMP + diphosphate + H(+). It functions in the pathway cofactor biosynthesis; (R)-pantothenate biosynthesis; (R)-pantothenate from (R)-pantoate and beta-alanine: step 1/1. Functionally, catalyzes the condensation of pantoate with beta-alanine in an ATP-dependent reaction via a pantoyl-adenylate intermediate. The polypeptide is Pantothenate synthetase (Xylella fastidiosa (strain M12)).